The following is a 660-amino-acid chain: V-type ATP synthase subunit I (660 aa).

The next 7 membrane-spanning stretches (helical) occupy residues Phe-312–Phe-332, Ile-362–Phe-382, Phe-453–Gly-473, Ile-485–Val-505, Gly-520–Ile-540, Val-560–Phe-580, and Ser-593–Ile-613.

This sequence belongs to the V-ATPase 116 kDa subunit family.

Its subcellular location is the cell membrane. Its function is as follows. Produces ATP from ADP in the presence of a proton gradient across the membrane. This is V-type ATP synthase subunit I (atpI) from Chlamydia pneumoniae (Chlamydophila pneumoniae).